We begin with the raw amino-acid sequence, 244 residues long: Purine nucleoside phosphorylase HI_0175 (244 aa).

Residues His70, Cys105, and His122 each coordinate Zn(2+).

The protein belongs to the purine nucleoside phosphorylase YfiH/LACC1 family. Homodimer. Cu(2+) serves as cofactor. Requires Zn(2+) as cofactor.

The catalysed reaction is adenosine + phosphate = alpha-D-ribose 1-phosphate + adenine. The enzyme catalyses S-methyl-5'-thioadenosine + phosphate = 5-(methylsulfanyl)-alpha-D-ribose 1-phosphate + adenine. It catalyses the reaction inosine + phosphate = alpha-D-ribose 1-phosphate + hypoxanthine. It carries out the reaction adenosine + H2O + H(+) = inosine + NH4(+). Purine nucleoside enzyme that catalyzes the phosphorolysis of adenosine and inosine nucleosides, yielding D-ribose 1-phosphate and the respective free bases, adenine and hypoxanthine. Also catalyzes the phosphorolysis of S-methyl-5'-thioadenosine into adenine and S-methyl-5-thio-alpha-D-ribose 1-phosphate. Also has adenosine deaminase activity. The polypeptide is Purine nucleoside phosphorylase HI_0175 (Haemophilus influenzae (strain ATCC 51907 / DSM 11121 / KW20 / Rd)).